The primary structure comprises 281 residues: Ribulose-5-phosphate-3-epimerase, chloroplastic (281 aa).

The transit peptide at 1–45 (MSTSAASLCCSSTQVNGFGLRPERSLLYQPTSFSFSRRRTHGIVK) directs the protein to the chloroplast. Residue serine 63 participates in substrate binding. Residues histidine 88, aspartate 90, and histidine 121 each coordinate a divalent metal cation. Residue aspartate 90 is the Proton acceptor of the active site. Substrate is bound by residues histidine 121, 199–202 (GFGG), 232–234 (DGG), and 254–256 (GSA). Residue aspartate 232 coordinates a divalent metal cation. The active-site Proton donor is the aspartate 232.

This sequence belongs to the ribulose-phosphate 3-epimerase family. In terms of assembly, homooctamer. Co(2+) is required as a cofactor. Fe(2+) serves as cofactor. Requires Mn(2+) as cofactor. The cofactor is Zn(2+). In terms of tissue distribution, present in roots, seeds and flowers. Accumulates in nematode feeding sites (NFS).

It localises to the plastid. It is found in the chloroplast thylakoid membrane. It catalyses the reaction D-ribulose 5-phosphate = D-xylulose 5-phosphate. It functions in the pathway carbohydrate biosynthesis; Calvin cycle. Its function is as follows. Essential protein required during embryogenesis. Catalyzes the reversible epimerization of D-ribulose 5-phosphate to D-xylulose 5-phosphate. Essential for the early steps of nematode feeding sites (NFS, multinucleated root cells) formation induced by the root-knot nematodes Heterodera schachtii, Meloidogyne incognita, M.javanica and M.hapla. The chain is Ribulose-5-phosphate-3-epimerase, chloroplastic from Arabidopsis thaliana (Mouse-ear cress).